The sequence spans 412 residues: Transcription factor NIGT1 (412 aa).

3 disordered regions span residues 54 to 241 (MDAA…RCWA), 286 to 310 (KYRLHTRRPSSTGQSSAAAGVPAPP), and 358 to 412 (AMLP…TTSA). The segment covering 90 to 112 (ESTHADAAKSGKKEEAETSERHS) has biased composition (basic and acidic residues). A compositionally biased stretch (low complexity) spans 183 to 193 (ASSTTAAASST). The span at 198–228 (SGDKPTDDDTEKHMETDKDNDKDAKDKDKEG) shows a compositional bias: basic and acidic residues. The HTH myb-type domain maps to 232–292 (PHRKPRRCWA…HLQKYRLHTR (61 aa)). The H-T-H motif DNA-binding region spans 263-288 (PKQIRELMKVDGLTNDEVKSHLQKYR). Basic and acidic residues predominate over residues 383 to 392 (SGSEGRRSGD). Low complexity predominate over residues 395-412 (DGSSSSPAVSSSSQTTSA).

The protein localises to the nucleus. Functionally, transcriptional repressor that may play a role in response to nitrogen. May be involved in a time-dependent signaling for transcriptional regulation of nitrate-responsive genes. Binds specifically to the DNA sequence motif 5'-GAATC-3' or 5'-GAATATTC-3'. Represses the activity of its own promoter trough binding to these motifs. The polypeptide is Transcription factor NIGT1 (Oryza sativa subsp. japonica (Rice)).